A 128-amino-acid polypeptide reads, in one-letter code: Large ribosomal subunit protein eL22 (128 aa).

Thr-62 carries the post-translational modification Phosphothreonine. Ser-66 is subject to Phosphoserine. Residue Lys-69 is modified to N6-succinyllysine.

This sequence belongs to the eukaryotic ribosomal protein eL22 family. As to quaternary structure, component of the large ribosomal subunit.

The protein localises to the cytoplasm. In terms of biological role, component of the large ribosomal subunit. The ribosome is a large ribonucleoprotein complex responsible for the synthesis of proteins in the cell. The sequence is that of Large ribosomal subunit protein eL22 (RPL22) from Sus scrofa (Pig).